Consider the following 156-residue polypeptide: ATP synthase subunit b (156 aa).

The helical transmembrane segment at 11-31 threads the bilayer; sequence AIAFVLFVLFCMKYVWPPIMA.

It belongs to the ATPase B chain family. As to quaternary structure, F-type ATPases have 2 components, F(1) - the catalytic core - and F(0) - the membrane proton channel. F(1) has five subunits: alpha(3), beta(3), gamma(1), delta(1), epsilon(1). F(0) has three main subunits: a(1), b(2) and c(10-14). The alpha and beta chains form an alternating ring which encloses part of the gamma chain. F(1) is attached to F(0) by a central stalk formed by the gamma and epsilon chains, while a peripheral stalk is formed by the delta and b chains.

Its subcellular location is the cell inner membrane. Functionally, f(1)F(0) ATP synthase produces ATP from ADP in the presence of a proton or sodium gradient. F-type ATPases consist of two structural domains, F(1) containing the extramembraneous catalytic core and F(0) containing the membrane proton channel, linked together by a central stalk and a peripheral stalk. During catalysis, ATP synthesis in the catalytic domain of F(1) is coupled via a rotary mechanism of the central stalk subunits to proton translocation. Its function is as follows. Component of the F(0) channel, it forms part of the peripheral stalk, linking F(1) to F(0). In Proteus mirabilis (strain HI4320), this protein is ATP synthase subunit b.